We begin with the raw amino-acid sequence, 457 residues long: Acetylcholine receptor subunit alpha (457 aa).

Residues 1-20 (MEPRPLLLLLGLCSAGLVLG) form the signal peptide. The Extracellular portion of the chain corresponds to 21–230 (SEHETRLVAK…ITYHFVMQRL (210 aa)). Disulfide bonds link C148-C162 and C212-C213. N161 is a glycosylation site (N-linked (GlcNAc...) asparagine). 3 consecutive transmembrane segments (helical) span residues 231-255 (PLYFIVNVIIPCLLFSFLTGLVFYL), 263-281 (MTLSISVLLSLTVFLLVIV), and 297-316 (YMLFTMVFVIASIIITVIVI). Over 317 to 428 (NTHHRSPSTH…WKYVAMVMDH (112 aa)) the chain is Cytoplasmic. The helical transmembrane segment at 429–447 (ILLAVFMLVCIIGTLAVFA) threads the bilayer.

Belongs to the ligand-gated ion channel (TC 1.A.9) family. Acetylcholine receptor (TC 1.A.9.1) subfamily. Alpha-1/CHRNA1 sub-subfamily. As to quaternary structure, one of the alpha chains that assemble within the acetylcholine receptor, a pentamer of two alpha chains, a beta, a delta, and a gamma (in immature muscle) or epsilon (in mature muscle) chains. The muscle heteropentamer composed of alpha-1, beta-1, delta, epsilon subunits interacts with the alpha-conotoxin ImII.

Its subcellular location is the postsynaptic cell membrane. The protein resides in the cell membrane. It carries out the reaction K(+)(in) = K(+)(out). It catalyses the reaction Na(+)(in) = Na(+)(out). Upon acetylcholine binding, the AChR responds by an extensive change in conformation that affects all subunits and leads to opening of an ion-conducting channel across the plasma membrane. This is Acetylcholine receptor subunit alpha (CHRNA1) from Bos taurus (Bovine).